Here is a 388-residue protein sequence, read N- to C-terminus: MADTTILDTTCSSTLAANVEFSHATDSAIGISLKNATITEAEGVPNLKETGYDCVRYMGTCNGGQIYLGRERKKLKDYVAIKKFAIDDVDDYAAIAKESSNLRLMHHPNIIELCECFVYERSIYQITPAMNLGSLFDIVFEYMKWGINEKSAAAITRQLLDALSYLHQRRYIHRDLKPKHILIDSSGNVKLSGFRFMIELNHHLDCVFEFDAHLQNQLYYLAPEVLAQNIHGYTSKSDIYMLGISICEAINGVMPFGELEPLEMLHRKLNGQVPRPVDMISLKDDQKMGLDISHRPQEHLTRRFSKEMHEFIANCLDYDPQQRGSASDLKSSAWLGSKIHKNLGPVDVRQELNLDYAHFDLSLWEQEPLIPMEPDQKYEIVFDYSPIS.

In terms of domain architecture, Protein kinase spans 52–335 (YDCVRYMGTC…ASDLKSSAWL (284 aa)). ATP contacts are provided by residues 58–66 (MGTCNGGQI) and K82.

It belongs to the protein kinase superfamily. STE Ser/Thr protein kinase family. STE20 subfamily. As to quaternary structure, interacts with sad-1. Interacts with par-4. As to expression, expressed in nervous system, pharynx and excretory canal. Expressed in germline.

The protein resides in the perikaryon. It localises to the nucleus. Its subcellular location is the cell projection. The protein localises to the dendrite. It is found in the axon. The protein resides in the synapse. It localises to the cytoplasm. Its subcellular location is the cell cortex. In terms of biological role, pseudokinase which may act as an adapter for kinases sad-1 and par-4 and thereby is involved in several developmental processes. Regulates cell-autonomously both neuronal polarity and synaptic organization when bound to sad-1. Required for sad-1 localization to synapses. Required to establish germline stem cell (GSC) quiescence during dauer development, to promote cell shedding during embryogenesis and to control asymmetric cell division of the Q.p neuroblast lineage, probably when bound to par-4. May be involved in maintaining the integrity of the early embryonic cortex when bound to par-4. This chain is STE20-related kinase adapter protein strd-1, found in Caenorhabditis elegans.